The primary structure comprises 189 residues: UPF0301 protein RT0098 (189 aa).

The protein belongs to the UPF0301 (AlgH) family.

The sequence is that of UPF0301 protein RT0098 from Rickettsia typhi (strain ATCC VR-144 / Wilmington).